Here is a 415-residue protein sequence, read N- to C-terminus: Elongation factor Tu, chloroplastic (415 aa).

Residues K13 to R217 enclose the tr-type G domain. The G1 stretch occupies residues G22–T29. Position 22–29 (G22–T29) interacts with GTP. Residue T29 participates in Mg(2+) binding. A G2 region spans residues N63–Y67. A G3 region spans residues D84–G87. GTP is bound by residues D84 to H88 and N139 to D142. A G4 region spans residues N139–D142. A G5 region spans residues S177–L179.

Belongs to the TRAFAC class translation factor GTPase superfamily. Classic translation factor GTPase family. EF-Tu/EF-1A subfamily.

It is found in the plastid. The protein resides in the chloroplast. It catalyses the reaction GTP + H2O = GDP + phosphate + H(+). GTP hydrolase that promotes the GTP-dependent binding of aminoacyl-tRNA to the A-site of ribosomes during protein biosynthesis. The protein is Elongation factor Tu, chloroplastic (tufA) of Coleochaete orbicularis (Charophycean green alga).